The following is a 159-amino-acid chain: Histone H2A (159 aa).

Gly residues predominate over residues 1 to 10 (MDSTGTGAGG). Disordered regions lie at residues 1–31 (MDST…SVSR) and 133–159 (KTAE…PKKA). Composition is skewed to basic residues over residues 11–29 (KGKK…KKSV) and 149–159 (PKKAAKSPKKA). Short sequence motifs (SPKK motif) lie at residues 148–151 (SPKK) and 155–158 (SPKK).

This sequence belongs to the histone H2A family. The nucleosome is a histone octamer containing two molecules each of H2A, H2B, H3 and H4 assembled in one H3-H4 heterotetramer and two H2A-H2B heterodimers. The octamer wraps approximately 147 bp of DNA.

It localises to the nucleus. The protein localises to the chromosome. Its function is as follows. Core component of nucleosome. Nucleosomes wrap and compact DNA into chromatin, limiting DNA accessibility to the cellular machineries which require DNA as a template. Histones thereby play a central role in transcription regulation, DNA repair, DNA replication and chromosomal stability. DNA accessibility is regulated via a complex set of post-translational modifications of histones, also called histone code, and nucleosome remodeling. In Zea mays (Maize), this protein is Histone H2A.